A 196-amino-acid chain; its full sequence is uncharacterized protein (196 aa).

Residues 1–21 form the signal peptide; sequence MNGKQCFCFFLFHLFYTGLFA. A lipid anchor (N-palmitoyl cysteine) is attached at Cys-22. Cys-22 is lipidated: S-diacylglycerol cysteine.

The protein localises to the cell membrane. This is an uncharacterized protein from Treponema pallidum (strain Nichols).